We begin with the raw amino-acid sequence, 165 residues long: Small ribosomal subunit protein uS5 (165 aa).

An S5 DRBM domain is found at leucine 13–isoleucine 76.

Belongs to the universal ribosomal protein uS5 family. Part of the 30S ribosomal subunit. Contacts proteins S4 and S8.

Its function is as follows. With S4 and S12 plays an important role in translational accuracy. In terms of biological role, located at the back of the 30S subunit body where it stabilizes the conformation of the head with respect to the body. This chain is Small ribosomal subunit protein uS5, found in Chlamydia abortus (strain DSM 27085 / S26/3) (Chlamydophila abortus).